The sequence spans 78 residues: Large ribosomal subunit protein bL28 (78 aa).

It belongs to the bacterial ribosomal protein bL28 family.

The sequence is that of Large ribosomal subunit protein bL28 (rpmB) from Treponema pallidum (strain Nichols).